A 240-amino-acid polypeptide reads, in one-letter code: Cysteine-rich venom protein (240 aa).

A signal peptide spans 1 to 19 (MIAFIVLPILAAVLQQSSG). One can recognise an SCP domain in the interval 39–166 (DLHNSLRRSV…EYSYFYVCQY (128 aa)). 8 disulfide bridges follow: C75/C153, C92/C167, C148/C164, C186/C193, C189/C198, C202/C235, C211/C229, and C220/C233. In terms of domain architecture, ShKT spans 202–235 (CRQENKFTNCDSLVRQSSCQDNYMKTNCPASCFC).

Belongs to the CRISP family. As to expression, expressed by the venom gland.

The protein localises to the secreted. Functionally, blocks contraction of smooth muscle elicited by high potassium-induced depolarization, but does not block caffeine-stimulated contraction. May target voltage-gated calcium channels on smooth muscle. This Protobothrops jerdonii (Jerdon's pitviper) protein is Cysteine-rich venom protein.